Reading from the N-terminus, the 836-residue chain is Serine/threonine-protein kinase ppk5 (836 aa).

Disordered stretches follow at residues 1-29 (MVGL…FLSP), 192-214 (INQL…TLSS), 230-307 (CSQF…YKSI), and 328-381 (TPLD…ERQN). Composition is skewed to polar residues over residues 192–205 (INQL…TNYP), 232–241 (QFASPRSSIV), and 265–288 (KPSN…TKLT). Residues 289-298 (SQRDNDHQKD) show a composition bias toward basic and acidic residues. A compositionally biased stretch (basic residues) spans 338-347 (SGKKFNKNSK). Low complexity predominate over residues 353–362 (STISSYSSAS). One can recognise a Protein kinase domain in the interval 518–814 (YEIIDTVGKG…VDSALQHEFI (297 aa)). Residues 524–532 (VGKGSFGQV) and Lys547 contribute to the ATP site. Residue Asp644 is the Proton acceptor of the active site. Tyr678 is subject to Phosphotyrosine.

The protein belongs to the protein kinase superfamily. CMGC Ser/Thr protein kinase family. MNB/DYRK subfamily.

The protein resides in the cytoplasm. It carries out the reaction L-seryl-[protein] + ATP = O-phospho-L-seryl-[protein] + ADP + H(+). The enzyme catalyses L-threonyl-[protein] + ATP = O-phospho-L-threonyl-[protein] + ADP + H(+). In terms of biological role, has a role in meiosis. In Schizosaccharomyces pombe (strain 972 / ATCC 24843) (Fission yeast), this protein is Serine/threonine-protein kinase ppk5 (ppk5).